The following is a 203-amino-acid chain: uncharacterized protein (203 aa).

The PilZ domain maps to 90 to 188 (EKRQHVRVQP…YENIIGRYVM (99 aa)).

This sequence to A.aeolicus aq_820 and aq_1583.

This is an uncharacterized protein from Aquifex aeolicus (strain VF5).